The following is a 159-amino-acid chain: Protein-export protein SecB (159 aa).

It belongs to the SecB family. As to quaternary structure, homotetramer, a dimer of dimers. One homotetramer interacts with 1 SecA dimer.

It localises to the cytoplasm. Functionally, one of the proteins required for the normal export of preproteins out of the cell cytoplasm. It is a molecular chaperone that binds to a subset of precursor proteins, maintaining them in a translocation-competent state. It also specifically binds to its receptor SecA. The chain is Protein-export protein SecB from Pseudomonas fluorescens (strain SBW25).